The primary structure comprises 602 residues: MHKYRTHNCNELQISDVETEVKLSGWVHRRRDHGNLVFIDLRDHYGITQIVFTDQNPQLMEDASRLRYESVITVRGTVVARSEDTINNTLPTGHVEVLAVEFSVESAADTLPFVINTEKDAPEESRFKHRFLDLRREKLHNNIILRSQIISHIRHLMTASGFTEFQTPILTASSPEGARDFLVPSRMHPGKFYALPQAPQQFKQLLMVSGFDRYFQIAPCFRDEDARADRSPGEFYQLDVEMSFVTQEDVFSTIEPVMYDLFTKFTDKKVSETPFVCIPYNESMLKYGSDKPDLRNPIIIADVTEIFRDSDFTIFRENIKKGSIVRAIPAPKAAALPRSFFDKMIEFAVSEGAGGLGYIQFSETGEAKGPVVKFLSPQQLESLKATASISNGDAVFFASDKKEKAAKLAGKVRIRLGEELDLLEKDCFKFCWITDFPFYELNEETGKIDFSHNPFSMPQGGIDALEQAKTTEELLELTAYQYDIVCNGIELSSGAIRNHKPEIMYKAFSIAGYSEEEVDKRFGGMIRAFKFGAPPHGGIAPGIDRIVMLLAEATNIREIIAFPLNQQAEDLLMNAPSYVEDKALKELSIMLSPSARKNAEKE.

Glutamate 176 is an L-aspartate binding site. The interval 200–203 is aspartate; that stretch reads QQFK. Residues arginine 222 and histidine 452 each contribute to the L-aspartate site. 222-224 is an ATP binding site; that stretch reads RDE. ATP is bound at residue glutamate 490. Residue arginine 497 participates in L-aspartate binding. 542–545 is a binding site for ATP; sequence GIDR.

The protein belongs to the class-II aminoacyl-tRNA synthetase family. Type 1 subfamily. As to quaternary structure, homodimer.

It is found in the cytoplasm. The catalysed reaction is tRNA(Asx) + L-aspartate + ATP = L-aspartyl-tRNA(Asx) + AMP + diphosphate. Functionally, aspartyl-tRNA synthetase with relaxed tRNA specificity since it is able to aspartylate not only its cognate tRNA(Asp) but also tRNA(Asn). Reaction proceeds in two steps: L-aspartate is first activated by ATP to form Asp-AMP and then transferred to the acceptor end of tRNA(Asp/Asn). The protein is Aspartate--tRNA(Asp/Asn) ligase of Rickettsia africae (strain ESF-5).